Consider the following 693-residue polypeptide: tRNA (guanine(37)-N(1))-methyltransferase (693 aa).

S-adenosyl-L-methionine-binding positions include arginine 327, 365–366, and 392–393; these read DI and DA. Residues 497 to 572 are disordered; sequence AGDSHQSNSH…QKAEDAPTNE (76 aa). A compositionally biased stretch (low complexity) spans 500–512; sequence SHQSNSHQSNPHE. S-adenosyl-L-methionine is bound at residue asparagine 591.

It belongs to the class I-like SAM-binding methyltransferase superfamily. TRM5/TYW2 family. Monomer.

The protein localises to the mitochondrion matrix. Its subcellular location is the nucleus. The protein resides in the cytoplasm. It catalyses the reaction guanosine(37) in tRNA + S-adenosyl-L-methionine = N(1)-methylguanosine(37) in tRNA + S-adenosyl-L-homocysteine + H(+). Specifically methylates the N1 position of guanosine-37 in various cytoplasmic and mitochondrial tRNAs. Methylation is not dependent on the nature of the nucleoside 5' of the target nucleoside. This is the first step in the biosynthesis of wybutosine (yW), a modified base adjacent to the anticodon of tRNAs and required for accurate decoding. The chain is tRNA (guanine(37)-N(1))-methyltransferase from Plasmodium vivax (strain Salvador I).